A 298-amino-acid polypeptide reads, in one-letter code: Protease HtpX homolog (298 aa).

The next 2 membrane-spanning stretches (helical) occupy residues 14-34 (VVLL…AGYL) and 39-59 (YAMG…SMIF). Residue histidine 143 coordinates Zn(2+). Residue glutamate 144 is part of the active site. Histidine 147 serves as a coordination point for Zn(2+). Transmembrane regions (helical) follow at residues 158–178 (IAVA…RMLW) and 197–217 (IITL…ASLI). Position 226 (glutamate 226) interacts with Zn(2+).

It belongs to the peptidase M48B family. Requires Zn(2+) as cofactor.

The protein localises to the cell membrane. This Streptococcus pyogenes serotype M3 (strain SSI-1) protein is Protease HtpX homolog.